A 338-amino-acid polypeptide reads, in one-letter code: Phenylalanine--tRNA ligase alpha subunit (338 aa).

Glutamate 252 contributes to the Mg(2+) binding site.

This sequence belongs to the class-II aminoacyl-tRNA synthetase family. Phe-tRNA synthetase alpha subunit type 1 subfamily. Tetramer of two alpha and two beta subunits. It depends on Mg(2+) as a cofactor.

Its subcellular location is the cytoplasm. The catalysed reaction is tRNA(Phe) + L-phenylalanine + ATP = L-phenylalanyl-tRNA(Phe) + AMP + diphosphate + H(+). This Aquifex aeolicus (strain VF5) protein is Phenylalanine--tRNA ligase alpha subunit (pheS).